The sequence spans 446 residues: tRNA-2-methylthio-N(6)-dimethylallyladenosine synthase (446 aa).

The region spanning 3–124 (KKLYIKTYGC…LPELISKVVR (122 aa)) is the MTTase N-terminal domain. [4Fe-4S] cluster-binding residues include Cys12, Cys48, Cys87, Cys162, Cys166, and Cys169. A Radical SAM core domain is found at 148–380 (YPQGASAFIS…QKELSSQQLA (233 aa)). Residues 383–446 (ESCVGSTMKV…SNSLTGEIYT (64 aa)) form the TRAM domain.

Belongs to the methylthiotransferase family. MiaB subfamily. In terms of assembly, monomer. [4Fe-4S] cluster serves as cofactor.

It is found in the cytoplasm. It catalyses the reaction N(6)-dimethylallyladenosine(37) in tRNA + (sulfur carrier)-SH + AH2 + 2 S-adenosyl-L-methionine = 2-methylsulfanyl-N(6)-dimethylallyladenosine(37) in tRNA + (sulfur carrier)-H + 5'-deoxyadenosine + L-methionine + A + S-adenosyl-L-homocysteine + 2 H(+). In terms of biological role, catalyzes the methylthiolation of N6-(dimethylallyl)adenosine (i(6)A), leading to the formation of 2-methylthio-N6-(dimethylallyl)adenosine (ms(2)i(6)A) at position 37 in tRNAs that read codons beginning with uridine. The sequence is that of tRNA-2-methylthio-N(6)-dimethylallyladenosine synthase from Rickettsia canadensis (strain McKiel).